The primary structure comprises 368 residues: High affinity transport system protein p37 (368 aa).

Residues 1–25 (MLFKKFTWVIPSLFLTIISTSLLIS) form the signal peptide. Cysteine 26 carries the N-palmitoyl cysteine lipid modification. A lipid anchor (S-diacylglycerol cysteine) is attached at cysteine 26.

Its subcellular location is the cell membrane. Its function is as follows. P37 is part of a high-affinity transport system. The sequence is that of High affinity transport system protein p37 (p37) from Mycoplasma genitalium (strain ATCC 33530 / DSM 19775 / NCTC 10195 / G37) (Mycoplasmoides genitalium).